Consider the following 301-residue polypeptide: Immediate early response gene 5-like protein (301 aa).

The protein belongs to the IER family.

This chain is Immediate early response gene 5-like protein (ier5l), found in Danio rerio (Zebrafish).